A 144-amino-acid chain; its full sequence is Ribosome-binding factor A (144 aa).

Residues 120–144 (DKRRMAEAGREEDEAAPDDTTEDKA) form a disordered region. Acidic residues predominate over residues 129 to 144 (REEDEAAPDDTTEDKA).

It belongs to the RbfA family. In terms of assembly, monomer. Binds 30S ribosomal subunits, but not 50S ribosomal subunits or 70S ribosomes.

The protein resides in the cytoplasm. Functionally, one of several proteins that assist in the late maturation steps of the functional core of the 30S ribosomal subunit. Associates with free 30S ribosomal subunits (but not with 30S subunits that are part of 70S ribosomes or polysomes). Required for efficient processing of 16S rRNA. May interact with the 5'-terminal helix region of 16S rRNA. The sequence is that of Ribosome-binding factor A from Aeromonas salmonicida (strain A449).